Reading from the N-terminus, the 513-residue chain is Steroid (22S)-hydroxylase (513 aa).

Residues 8–28 traverse the membrane as a helical segment; sequence TLLPLLLLPSLLSLLLFLILL. The interval 252–277 is disordered; it reads DIKEEDQEEEEVKTEDEAEMSKSDHV. Over residues 254–269 the composition is skewed to acidic residues; the sequence is KEEDQEEEEVKTEDEA. C462 provides a ligand contact to heme.

The protein belongs to the cytochrome P450 family. Requires heme as cofactor. Expressed in stems, leaves, shoots, and roots, with a higher expression in siliques and apical shoots.

Its subcellular location is the membrane. It carries out the reaction a C27-steroid + reduced [NADPH--hemoprotein reductase] + O2 = a (22S)-22-hydroxy C27-steroid + oxidized [NADPH--hemoprotein reductase] + H2O + H(+). The enzyme catalyses a C28-steroid + reduced [NADPH--hemoprotein reductase] + O2 = a (22S)-22-hydroxy C28-steroid + oxidized [NADPH--hemoprotein reductase] + H2O + H(+). The catalysed reaction is a C29-steroid + reduced [NADPH--hemoprotein reductase] + O2 = a (22S)-22-hydroxy C29-steroid + oxidized [NADPH--hemoprotein reductase] + H2O + H(+). It catalyses the reaction cholesterol + reduced [NADPH--hemoprotein reductase] + O2 = (22S)-22-hydroxycholesterol + oxidized [NADPH--hemoprotein reductase] + H2O + H(+). It carries out the reaction cholestanol + reduced [NADPH--hemoprotein reductase] + O2 = (22S)-22-hydroxycholestanol + oxidized [NADPH--hemoprotein reductase] + H2O + H(+). The enzyme catalyses campestanol + reduced [NADPH--hemoprotein reductase] + O2 = 6-deoxycathasterone + oxidized [NADPH--hemoprotein reductase] + H2O + H(+). The catalysed reaction is campesterol + reduced [NADPH--hemoprotein reductase] + O2 = (22S)-22-hydroxycampesterol + oxidized [NADPH--hemoprotein reductase] + H2O + H(+). It catalyses the reaction 6-oxocampestanol + reduced [NADPH--hemoprotein reductase] + O2 = cathasterone + oxidized [NADPH--hemoprotein reductase] + H2O + H(+). It carries out the reaction sitosterol + reduced [NADPH--hemoprotein reductase] + O2 = (22S)-22-hydroxysitosterol + oxidized [NADPH--hemoprotein reductase] + H2O + H(+). It participates in plant hormone biosynthesis; brassinosteroid biosynthesis. In terms of biological role, catalyzes the C22-alpha-hydroxylation step in brassinosteroids biosynthesis. Converts campesterol (CR) to (22S)-22-hydroxycampesterol (22-OHCR, 22-hydroxyCR), campestanol (CN) to 6-deoxycathasterone (6-deoxoCT), and 6-oxocampestanol (6-oxoCN) to cathasterone (CT). Can also use cholesterol and cholestanol as substrates. The chain is Steroid (22S)-hydroxylase from Arabidopsis thaliana (Mouse-ear cress).